The primary structure comprises 304 residues: MNHLTAMSELSAAEITELLREAKAIKEGTVRHDLAGKFVANLFFEPSTRTRFSFEVAEKKLGMNVLSLDDTSTSVQKGESLYDTVKTLESIGADACVIRHSTDEYYKDLTGRVNIPILNAGDGCGQHPTQSLLDLMTIQEEFETFQGLTVSIHGDIKHSRVARSNAEVLTRLGARVLFSGPPQWQDEKNAFGTCVQTDEAIQASDVVMLLRIQNERHQTEADQKGYLEAYGLTAKRAESMKRHAIIMHPAPVNRGVEIDTTLVECGKSRIFKQMENGVYIRMAVLKRALQTNVKRGEAAYVLSH.

Residues Arg49 and Thr50 each coordinate carbamoyl phosphate. Lys77 contacts L-aspartate. Carbamoyl phosphate is bound by residues Arg99, His127, and Gln130. Residues Arg160 and Arg211 each contribute to the L-aspartate site. Carbamoyl phosphate contacts are provided by Ala250 and Pro251.

The protein belongs to the aspartate/ornithine carbamoyltransferase superfamily. ATCase family. Heterododecamer (2C3:3R2) of six catalytic PyrB chains organized as two trimers (C3), and six regulatory PyrI chains organized as three dimers (R2).

The catalysed reaction is carbamoyl phosphate + L-aspartate = N-carbamoyl-L-aspartate + phosphate + H(+). It participates in pyrimidine metabolism; UMP biosynthesis via de novo pathway; (S)-dihydroorotate from bicarbonate: step 2/3. Functionally, catalyzes the condensation of carbamoyl phosphate and aspartate to form carbamoyl aspartate and inorganic phosphate, the committed step in the de novo pyrimidine nucleotide biosynthesis pathway. The chain is Aspartate carbamoyltransferase catalytic subunit from Bacillus velezensis (strain DSM 23117 / BGSC 10A6 / LMG 26770 / FZB42) (Bacillus amyloliquefaciens subsp. plantarum).